A 135-amino-acid chain; its full sequence is Galectin-1 (135 aa).

A2 is subject to N-acetylalanine. Positions 4 to 135 (GLVASNLNLK…DFKIKCVAFE (132 aa)) constitute a Galectin domain. 3 positions are modified to N6-acetyllysine: K13, K19, and K29. The residue at position 30 (S30) is a Phosphoserine. Residues 45–49 (HFNPR), H53, N62, and 69–72 (WGAE) each bind a beta-D-galactoside. At K128 the chain carries N6-acetyllysine.

In terms of assembly, homodimer. Binds LGALS3BP. Interacts with CD2, CD3, CD4, CD6, CD7, CD43, ALCAM and CD45. Interacts with laminin (via poly-N-acetyllactosamine). Interacts with SUSD2. Interacts with cargo receptor TMED10; the interaction mediates the translocation from the cytoplasm into the ERGIC (endoplasmic reticulum-Golgi intermediate compartment) and thereby secretion.

It localises to the secreted. The protein resides in the extracellular space. It is found in the extracellular matrix. The protein localises to the cytoplasm. Its function is as follows. Lectin that binds beta-galactoside and a wide array of complex carbohydrates. Plays a role in regulating apoptosis, cell proliferation and cell differentiation. Inhibits CD45 protein phosphatase activity and therefore the dephosphorylation of Lyn kinase. Strong inducer of T-cell apoptosis. This is Galectin-1 (LGALS1) from Sus scrofa (Pig).